The sequence spans 1031 residues: Beta-galactosidase (1031 aa).

The substrate site is built by N98 and D197. D197 lines the Na(+) pocket. Mg(2+) contacts are provided by E412, H414, and E457. Residues E457 and 533–536 (EYAH) contribute to the substrate site. E457 functions as the Proton donor in the catalytic mechanism. The active-site Nucleophile is E533. N593 is a binding site for Mg(2+). F597 and D600 together coordinate Na(+). Residues D600 and W1005 each coordinate substrate.

This sequence belongs to the glycosyl hydrolase 2 family. In terms of assembly, homotetramer. It depends on Mg(2+) as a cofactor. Na(+) serves as cofactor.

The enzyme catalyses Hydrolysis of terminal non-reducing beta-D-galactose residues in beta-D-galactosides.. The polypeptide is Beta-galactosidase (Oenococcus oeni (strain ATCC BAA-331 / PSU-1)).